A 283-amino-acid chain; its full sequence is Protein FAM170A (283 aa).

Disordered regions lie at residues 1 to 54 (MKRR…RSQH) and 123 to 171 (GTPP…AKTP). Positions 127 to 138 (SDVSTRNLLSDS) are enriched in polar residues. Basic and acidic residues predominate over residues 142–153 (GEEKEHEERTES). Residue T170 is modified to Phosphothreonine. A C2H2-type; degenerate zinc finger spans residues 181 to 205 (FRCMACCRVFTTMEALQEHVQFGIR). Positions 223–283 (NMESESTQDE…VFHSPKDRNS (61 aa)) are disordered. Acidic residues predominate over residues 228–246 (STQDEQEEENGNEKEEEEK). S268 carries the phosphoserine modification.

The protein belongs to the FAM170 family.

It localises to the nucleus. Functionally, acts as a nuclear transcription factor that positively regulates the expression of heat shock genes. Binds to heat shock promoter elements (HSE). The sequence is that of Protein FAM170A (FAM170A) from Macaca fascicularis (Crab-eating macaque).